Reading from the N-terminus, the 399-residue chain is MAREKFERNKPHVNIGTIGHVDHGKTTLTAAITNVLAKKGQAQAQDYGDIDGAPEERERGITINTAHVEYETEGRHYAHVDCPGHADYVKNMITGAAQMDGAILVCAATDGPMAQTKEHILLAKQVGVPALVVALNKCDMVDDEEIIELVEMEIRELLDSYDFPGDDIPIVQVSGLKALEGDSTWESKIEELMTAVDASIPEPEREVDKPFLMAVEDVFSITGRGTVATGRIERGKVKVGEEVEIVGIRDTRLTTVTGVEMFRKLLDEGMAGDNVGLLLRGVQKEDIERGMVLVKKGSITPHTQFEGEVYVLKKEEGGRHTPFFAGYRPQFYIRTTDVTGQITAFTSDDGSNVEMVMPGDRIKMTGELICPVAIEQGMRFAIREGGRTIGAGVVSKILK.

A tr-type G domain is found at 10–204 (KPHVNIGTIG…AVDASIPEPE (195 aa)). Residues 19–26 (GHVDHGKT) are G1. 19–26 (GHVDHGKT) is a GTP binding site. Thr26 provides a ligand contact to Mg(2+). The tract at residues 60–64 (GITIN) is G2. Positions 81–84 (DCPG) are G3. GTP is bound by residues 81 to 85 (DCPGH) and 136 to 139 (NKCD). A G4 region spans residues 136–139 (NKCD). Positions 174 to 176 (SGL) are G5.

It belongs to the TRAFAC class translation factor GTPase superfamily. Classic translation factor GTPase family. EF-Tu/EF-1A subfamily. In terms of assembly, monomer.

It is found in the cytoplasm. It carries out the reaction GTP + H2O = GDP + phosphate + H(+). Functionally, GTP hydrolase that promotes the GTP-dependent binding of aminoacyl-tRNA to the A-site of ribosomes during protein biosynthesis. The sequence is that of Elongation factor Tu from Prochlorococcus marinus (strain MIT 9312).